A 280-amino-acid polypeptide reads, in one-letter code: Energy-coupling factor transporter ATP-binding protein EcfA1 (280 aa).

The ABC transporter domain occupies 6-241; it reads IELKNVTFRY…GDELLDLGLD (236 aa). An ATP-binding site is contributed by 41 to 48; it reads GHNGSGKS.

The protein belongs to the ABC transporter superfamily. Energy-coupling factor EcfA family. As to quaternary structure, forms a stable energy-coupling factor (ECF) transporter complex composed of 2 membrane-embedded substrate-binding proteins (S component), 2 ATP-binding proteins (A component) and 2 transmembrane proteins (T component).

It is found in the cell membrane. Its function is as follows. ATP-binding (A) component of a common energy-coupling factor (ECF) ABC-transporter complex. Unlike classic ABC transporters this ECF transporter provides the energy necessary to transport a number of different substrates. The chain is Energy-coupling factor transporter ATP-binding protein EcfA1 from Streptococcus mutans serotype c (strain ATCC 700610 / UA159).